The chain runs to 184 residues: Photosystem I assembly protein Ycf4 (184 aa).

2 consecutive transmembrane segments (helical) span residues 22-42 (FFWAFILFLGSLGFLLVGTSS) and 57-77 (IIFFPQGIVMSFYGIAGLFIS).

Belongs to the Ycf4 family.

It localises to the plastid. The protein localises to the chloroplast thylakoid membrane. Functionally, seems to be required for the assembly of the photosystem I complex. This Aethionema cordifolium (Lebanon stonecress) protein is Photosystem I assembly protein Ycf4.